The primary structure comprises 507 residues: Histidine ammonia-lyase (507 aa).

Positions 141–143 (ASG) form a cross-link, 5-imidazolinone (Ala-Gly). Serine 142 is modified (2,3-didehydroalanine (Ser)).

This sequence belongs to the PAL/histidase family. Post-translationally, contains an active site 4-methylidene-imidazol-5-one (MIO), which is formed autocatalytically by cyclization and dehydration of residues Ala-Ser-Gly.

The protein resides in the cytoplasm. The enzyme catalyses L-histidine = trans-urocanate + NH4(+). It participates in amino-acid degradation; L-histidine degradation into L-glutamate; N-formimidoyl-L-glutamate from L-histidine: step 1/3. In Burkholderia ambifaria (strain MC40-6), this protein is Histidine ammonia-lyase.